The sequence spans 82 residues: Cortexin-1 (82 aa).

The interval 1-20 (MSAPWTLSPEPLPPSTGPPV) is disordered. The chain crosses the membrane as a helical span at residues 30–50 (TVFAFVLCLLVVLVLLMVRCV).

The protein belongs to the cortexin family. Neuron specific.

It is found in the membrane. Functionally, may mediate extracellular or intracellular signaling of cortical neurons during forebrain development. This Rattus norvegicus (Rat) protein is Cortexin-1 (Ctxn1).